The sequence spans 176 residues: Large ribosomal subunit protein uL6 (176 aa).

This sequence belongs to the universal ribosomal protein uL6 family. In terms of assembly, part of the 50S ribosomal subunit.

This protein binds to the 23S rRNA, and is important in its secondary structure. It is located near the subunit interface in the base of the L7/L12 stalk, and near the tRNA binding site of the peptidyltransferase center. This is Large ribosomal subunit protein uL6 from Burkholderia ambifaria (strain MC40-6).